The chain runs to 450 residues: Probable malate:quinone oxidoreductase (450 aa).

This sequence belongs to the MQO family. FAD is required as a cofactor.

The enzyme catalyses (S)-malate + a quinone = a quinol + oxaloacetate. Its pathway is carbohydrate metabolism; tricarboxylic acid cycle; oxaloacetate from (S)-malate (quinone route): step 1/1. The sequence is that of Probable malate:quinone oxidoreductase from Helicobacter acinonychis (strain Sheeba).